The sequence spans 466 residues: UDP-N-acetylmuramoylalanine--D-glutamate ligase (466 aa).

115–121 (GTDGKTT) contacts ATP.

Belongs to the MurCDEF family.

It localises to the cytoplasm. It catalyses the reaction UDP-N-acetyl-alpha-D-muramoyl-L-alanine + D-glutamate + ATP = UDP-N-acetyl-alpha-D-muramoyl-L-alanyl-D-glutamate + ADP + phosphate + H(+). It functions in the pathway cell wall biogenesis; peptidoglycan biosynthesis. Functionally, cell wall formation. Catalyzes the addition of glutamate to the nucleotide precursor UDP-N-acetylmuramoyl-L-alanine (UMA). This chain is UDP-N-acetylmuramoylalanine--D-glutamate ligase, found in Chlorobium phaeobacteroides (strain BS1).